The primary structure comprises 132 residues: Antileukoproteinase (132 aa).

The first 24 residues, 1 to 24 (MKFSGLFPFLLLALGTLALWAVEG), serve as a signal peptide directing secretion. The WAP 1 domain occupies 28–76 (EALKAGACPPRKSAQCFGNEKPRCSSDWQCPHKKKCCLDTCGTECLDPV). 4 disulfides stabilise this stretch: Cys35–Cys64, Cys43–Cys68, Cys51–Cys63, and Cys57–Cys72. Residue Asn77 is glycosylated (N-linked (GlcNAc...) asparagine). Residues 82 to 130 (VKKKPGTCPVIHGQCLMLKPLNHCETDDQCIGALKCCKAMCGKVCLSPV) form the WAP 2 domain. 4 cysteine pairs are disulfide-bonded: Cys89–Cys118, Cys96–Cys122, Cys105–Cys117, and Cys111–Cys126.

In terms of assembly, interacts with GRN; interaction protects progranulin from proteolysis. Detected in bronchoalveolar fluid (at protein level). Detected in large and small intestine, trachea, skin, lung and tongue.

It localises to the secreted. Acid-stable proteinase inhibitor with strong affinities for trypsin, chymotrypsin, elastase, and cathepsin G. Modulates the inflammatory and immune responses after bacterial infection, and after infection by the intracellular parasite L.major. Down-regulates responses to bacterial lipopolysaccharide (LPS). Plays a role in regulating the activation of NF-kappa-B and inflammatory responses. Has antimicrobial activity against mycobacteria, but not against salmonella. Contributes to normal resistance against infection by M.tuberculosis. Required for normal resistance to infection by L.major. Required for normal wound healing, probably by preventing tissue damage by limiting protease activity. Together with ELANE, required for normal differentiation and proliferation of bone marrow myeloid cells. The chain is Antileukoproteinase (SLPI) from Ovis aries (Sheep).